Reading from the N-terminus, the 163-residue chain is Transcription elongation factor GreA (163 aa).

A coiled-coil region spans residues 11–38; the sequence is FKQLEKELDRLKKERPGVIQAIKEAREE.

The protein belongs to the GreA/GreB family.

Functionally, necessary for efficient RNA polymerase transcription elongation past template-encoded arresting sites. The arresting sites in DNA have the property of trapping a certain fraction of elongating RNA polymerases that pass through, resulting in locked ternary complexes. Cleavage of the nascent transcript by cleavage factors such as GreA or GreB allows the resumption of elongation from the new 3'terminus. GreA releases sequences of 2 to 3 nucleotides. This Nitratidesulfovibrio vulgaris (strain ATCC 29579 / DSM 644 / CCUG 34227 / NCIMB 8303 / VKM B-1760 / Hildenborough) (Desulfovibrio vulgaris) protein is Transcription elongation factor GreA.